The sequence spans 395 residues: Chorismate synthase (395 aa).

The protein belongs to the chorismate synthase family. In terms of assembly, homotetramer. FMNH2 serves as cofactor.

The catalysed reaction is 5-O-(1-carboxyvinyl)-3-phosphoshikimate = chorismate + phosphate. The protein operates within metabolic intermediate biosynthesis; chorismate biosynthesis; chorismate from D-erythrose 4-phosphate and phosphoenolpyruvate: step 7/7. In Schizosaccharomyces pombe (strain 972 / ATCC 24843) (Fission yeast), this protein is Chorismate synthase.